Here is a 297-residue protein sequence, read N- to C-terminus: Bifunctional protein FolD (297 aa).

Residues 164-166, Ser193, and Val234 contribute to the NADP(+) site; that span reads GRS.

This sequence belongs to the tetrahydrofolate dehydrogenase/cyclohydrolase family. As to quaternary structure, homodimer.

It carries out the reaction (6R)-5,10-methylene-5,6,7,8-tetrahydrofolate + NADP(+) = (6R)-5,10-methenyltetrahydrofolate + NADPH. The enzyme catalyses (6R)-5,10-methenyltetrahydrofolate + H2O = (6R)-10-formyltetrahydrofolate + H(+). Its pathway is one-carbon metabolism; tetrahydrofolate interconversion. Its function is as follows. Catalyzes the oxidation of 5,10-methylenetetrahydrofolate to 5,10-methenyltetrahydrofolate and then the hydrolysis of 5,10-methenyltetrahydrofolate to 10-formyltetrahydrofolate. The chain is Bifunctional protein FolD from Natronomonas pharaonis (strain ATCC 35678 / DSM 2160 / CIP 103997 / JCM 8858 / NBRC 14720 / NCIMB 2260 / Gabara) (Halobacterium pharaonis).